Here is a 424-residue protein sequence, read N- to C-terminus: MHLNSSVQQGAPSEPGAQPFPHPQFGLETMLLALSLSNGSGNSSESILEPNSNLDVNTDIYSKVLVTAVYLALFVVGTVGNSVTAFTLARKKSLQSLQSTVHYHLGSLALSDLLILLLAMPVELYNFIWVHHPWAFGDAGCRGYYFLRDACTYATALNVASLSVERYLAICHPFKAKTLMSRSRTKKFISAIWLASALLAVPMLFTMGLQNRSADGQHPGGLVCTPTVDTATVKVVIQVNTFMSFLFPMLIISILNTVIANKLTVMVHQAAEQGRGVCTVGTHNSLEHSTFNMSIEPGRVQALRHGVLVLRAVVIAFVVCWLPYHVRRLMFCYISDEQWTTFLFDFYHYFYMLTNALFYVSSAINPILYNLVSANFRQVFLSTLACLCPGWRRRRKKRPTFSRKPNSMSSNHAFSTSATRETLY.

The Extracellular portion of the chain corresponds to 1-67 (MHLNSSVQQG…TDIYSKVLVT (67 aa)). N-linked (GlcNAc...) asparagine glycans are attached at residues Asn4, Asn38, and Asn42. Residues 68 to 88 (AVYLALFVVGTVGNSVTAFTL) traverse the membrane as a helical segment. Topologically, residues 89–102 (ARKKSLQSLQSTVH) are cytoplasmic. Residues 103–122 (YHLGSLALSDLLILLLAMPV) form a helical membrane-spanning segment. Topologically, residues 123 to 142 (ELYNFIWVHHPWAFGDAGCR) are extracellular. A disulfide bridge connects residues Cys141 and Cys224. A helical transmembrane segment spans residues 143–164 (GYYFLRDACTYATALNVASLSV). The Cytoplasmic segment spans residues 165–184 (ERYLAICHPFKAKTLMSRSR). A helical membrane pass occupies residues 185-205 (TKKFISAIWLASALLAVPMLF). Residues 206-234 (TMGLQNRSADGQHPGGLVCTPTVDTATVK) are Extracellular-facing. Residue Asn211 is glycosylated (N-linked (GlcNAc...) asparagine). Residues 235 to 259 (VVIQVNTFMSFLFPMLIISILNTVI) traverse the membrane as a helical segment. At 260–308 (ANKLTVMVHQAAEQGRGVCTVGTHNSLEHSTFNMSIEPGRVQALRHGVL) the chain is on the cytoplasmic side. The helical transmembrane segment at 309–330 (VLRAVVIAFVVCWLPYHVRRLM) threads the bilayer. The interval 326–349 (VRRLMFCYISDEQWTTFLFDFYHY) is neurotensin binding. Over 331–348 (FCYISDEQWTTFLFDFYH) the chain is Extracellular. The chain crosses the membrane as a helical span at residues 349–369 (YFYMLTNALFYVSSAINPILY). Over 370 to 424 (NLVSANFRQVFLSTLACLCPGWRRRRKKRPTFSRKPNSMSSNHAFSTSATRETLY) the chain is Cytoplasmic. 2 S-palmitoyl cysteine lipidation sites follow: Cys386 and Cys388. Residues 398–424 (RPTFSRKPNSMSSNHAFSTSATRETLY) are disordered. Over residues 403–424 (RKPNSMSSNHAFSTSATRETLY) the composition is skewed to polar residues.

This sequence belongs to the G-protein coupled receptor 1 family. Neurotensin receptor subfamily. NTSR1 sub-subfamily. In terms of assembly, interacts (palmitoylated form) with GNA11. In terms of processing, N-glycosylated. Palmitoylated; this is required for normal localization at membrane rafts and normal GNA11-mediated activation of down-stream signaling cascades. The palmitoylation level increases in response to neurotensin treatment.

It localises to the cell membrane. It is found in the membrane raft. In terms of biological role, G-protein coupled receptor for the tridecapeptide neurotensin (NTS). Signaling is effected via G proteins that activate a phosphatidylinositol-calcium second messenger system. Signaling leads to the activation of downstream MAP kinases and protects cells against apoptosis. The chain is Neurotensin receptor type 1 (Ntsr1) from Mus musculus (Mouse).